We begin with the raw amino-acid sequence, 352 residues long: MTTDIFFNPIWDVRLTDTSLRDGSHHKRHQFTKDEVQAIVAALDAAGVPVIEVTHGDGLGGSSFNYGFSKTPEQELIKLAAETAKDAKIAFLMLPGVGTKEDIKEAQNNGGSICRIATHCTEADVSIQHFGLARELGLETVGFLMMSHTIPPEKLAQQARIMADAGCQCVYVVDSAGALVLEGVRDRVAALVAELGDDAQVGFHGHENLGLGVANSVEAVRAGAKQIDGSCRRFGAGAGNAPVEALIGVFDKIGVKTGIDFFDIADAAEEVVAPAMPAECLLDRNALIMGYSGVYSSFLKHAIRQSERYGVPAHQLLHRAGQRKLIGGQEDQLIDIALEIKREQESGAAAAR.

The Pyruvate carboxyltransferase domain occupies 13 to 265 (VRLTDTSLRD…KTGIDFFDIA (253 aa)). 21–22 (RD) is a substrate binding site. Aspartate 22 is a Mn(2+) binding site. Histidine 25 serves as the catalytic Proton acceptor. Substrate contacts are provided by serine 175 and histidine 204. Mn(2+) contacts are provided by histidine 204 and histidine 206. Tyrosine 295 is a binding site for substrate.

This sequence belongs to the 4-hydroxy-2-oxovalerate aldolase family.

The enzyme catalyses (S)-4-hydroxy-2-oxopentanoate = acetaldehyde + pyruvate. This Mycolicibacterium paratuberculosis (strain ATCC BAA-968 / K-10) (Mycobacterium paratuberculosis) protein is 4-hydroxy-2-oxovalerate aldolase.